The primary structure comprises 296 residues: 4-hydroxybenzoate octaprenyltransferase (296 aa).

Helical transmembrane passes span 28–48 (PIGI…AGKG), 52–72 (LANI…GCVI), 102–122 (ALVF…CTNA), 146–166 (YYPQ…AFTA), 169–189 (GELP…TVGY), 219–239 (VIIL…GSKF), 241–261 (LGMW…WEFW), and 275–295 (FLHN…DYAL).

The protein belongs to the UbiA prenyltransferase family. Mg(2+) serves as cofactor.

It localises to the cell inner membrane. The enzyme catalyses all-trans-octaprenyl diphosphate + 4-hydroxybenzoate = 4-hydroxy-3-(all-trans-octaprenyl)benzoate + diphosphate. Its pathway is cofactor biosynthesis; ubiquinone biosynthesis. Its function is as follows. Catalyzes the prenylation of para-hydroxybenzoate (PHB) with an all-trans polyprenyl group. Mediates the second step in the final reaction sequence of ubiquinone-8 (UQ-8) biosynthesis, which is the condensation of the polyisoprenoid side chain with PHB, generating the first membrane-bound Q intermediate 3-octaprenyl-4-hydroxybenzoate. This Pseudomonas fluorescens (strain Pf0-1) protein is 4-hydroxybenzoate octaprenyltransferase.